Here is a 640-residue protein sequence, read N- to C-terminus: tRNA-dihydrouridine(47) synthase [NAD(P)(+)]-like (640 aa).

Residues 1–11 (MAESEGSNTEN) show a composition bias toward polar residues. Disordered stretches follow at residues 1–23 (MAESEGSNTENGKVGAVKSENLD) and 43–123 (FIDA…HSQF). A compositionally biased stretch (basic and acidic residues) spans 43–57 (FIDADGKDVTEKETC). Residues 58 to 72 (SELSLNDAENTTRTE) are compositionally biased toward polar residues. Basic and acidic residues predominate over residues 77 to 86 (PEAKRIKLDD). Residues 104–120 (EKKRARGQNKSRPHMKH) are compositionally biased toward basic residues. C3H1-type zinc fingers lie at residues 123 to 153 (FEENKLCPSVTQECASKCFFGDKCKFSHDVA) and 161 to 191 (EDIRPNCHLYETFGKCIYGVTCRFAKSHLGE). Residues 301–303 (PLT) and Gln-355 contribute to the FMN site. Cys-386 (proton donor) is an active-site residue. FMN-binding positions include Lys-425, His-455, 487 to 489 (NGD), and 510 to 511 (AR).

The protein belongs to the Dus family. Dus3 subfamily. FMN serves as cofactor.

It catalyses the reaction 5,6-dihydrouridine(47) in tRNA + NAD(+) = uridine(47) in tRNA + NADH + H(+). The catalysed reaction is 5,6-dihydrouridine(47) in tRNA + NADP(+) = uridine(47) in tRNA + NADPH + H(+). The enzyme catalyses a 5,6-dihydrouridine in mRNA + NAD(+) = a uridine in mRNA + NADH + H(+). It carries out the reaction a 5,6-dihydrouridine in mRNA + NADP(+) = a uridine in mRNA + NADPH + H(+). Catalyzes the synthesis of dihydrouridine, a modified base, in various RNAs, such as tRNAs, mRNAs and some long non-coding RNAs (lncRNAs). Mainly modifies the uridine in position 47 (U47) in the D-loop of most cytoplasmic tRNAs. Also able to mediate the formation of dihydrouridine in some mRNAs, thereby regulating their translation. This is tRNA-dihydrouridine(47) synthase [NAD(P)(+)]-like (dus3l) from Xenopus laevis (African clawed frog).